The following is a 208-amino-acid chain: Large ribosomal subunit protein bL25 (208 aa).

The protein belongs to the bacterial ribosomal protein bL25 family. CTC subfamily. As to quaternary structure, part of the 50S ribosomal subunit; part of the 5S rRNA/L5/L18/L25 subcomplex. Contacts the 5S rRNA. Binds to the 5S rRNA independently of L5 and L18.

Functionally, this is one of the proteins that binds to the 5S RNA in the ribosome where it forms part of the central protuberance. This chain is Large ribosomal subunit protein bL25, found in Phenylobacterium zucineum (strain HLK1).